Here is a 179-residue protein sequence, read N- to C-terminus: Large ribosomal subunit protein uL6 (179 aa).

Belongs to the universal ribosomal protein uL6 family. In terms of assembly, part of the 50S ribosomal subunit.

Its function is as follows. This protein binds to the 23S rRNA, and is important in its secondary structure. It is located near the subunit interface in the base of the L7/L12 stalk, and near the tRNA binding site of the peptidyltransferase center. The chain is Large ribosomal subunit protein uL6 from Trichodesmium erythraeum (strain IMS101).